The sequence spans 83 residues: U-actitoxin-Avd8d (83 aa).

The signal sequence occupies residues 1 to 19 (MASTRLFVLLVIGTVLLCQ). Residues 20 to 38 (VSGFLDELLAEHELPQDMT) constitute a propeptide that is removed on maturation.

It belongs to the sea anemone 8 toxin family.

Its subcellular location is the secreted. It localises to the nematocyst. In Anemonia viridis (Snakelocks anemone), this protein is U-actitoxin-Avd8d.